The sequence spans 489 residues: Valine--tRNA ligase (489 aa).

The 'KMSKS' region signature appears at 482–486 (KMSKS). Residue K485 participates in ATP binding.

Belongs to the class-I aminoacyl-tRNA synthetase family.

The enzyme catalyses tRNA(Val) + L-valine + ATP = L-valyl-tRNA(Val) + AMP + diphosphate. In Trichomonas vaginalis, this protein is Valine--tRNA ligase (VALS).